Consider the following 400-residue polypeptide: tRNA(Ile)-lysidine synthase (400 aa).

Serine 20–serine 25 contacts ATP.

This sequence belongs to the tRNA(Ile)-lysidine synthase family.

It localises to the cytoplasm. It carries out the reaction cytidine(34) in tRNA(Ile2) + L-lysine + ATP = lysidine(34) in tRNA(Ile2) + AMP + diphosphate + H(+). Its function is as follows. Ligates lysine onto the cytidine present at position 34 of the AUA codon-specific tRNA(Ile) that contains the anticodon CAU, in an ATP-dependent manner. Cytidine is converted to lysidine, thus changing the amino acid specificity of the tRNA from methionine to isoleucine. This chain is tRNA(Ile)-lysidine synthase, found in Wigglesworthia glossinidia brevipalpis.